Here is a 441-residue protein sequence, read N- to C-terminus: Platelet-activating factor acetylhydrolase (441 aa).

A signal peptide spans M1–P21. S273 (nucleophile) is an active-site residue. Active-site charge relay system residues include D296 and H351. N-linked (GlcNAc...) asparagine glycans are attached at residues N423 and N433.

This sequence belongs to the AB hydrolase superfamily. Lipase family. In terms of processing, N-glycosylated. Macrophage-derived PLA2G7 carries sialylated complex-type N-glycans that hinder its binding to HDL particles. Plasma. Secreted by macrophages (at protein level).

The protein localises to the secreted. Its subcellular location is the extracellular space. It catalyses the reaction a 1-O-alkyl-2-acetyl-sn-glycero-3-phosphocholine + H2O = a 1-O-alkyl-sn-glycero-3-phosphocholine + acetate + H(+). The catalysed reaction is 1-O-decyl-2-acetyl-sn-glycero-3-phosphocholine + H2O = 1-O-decyl-sn-glycero-3-phosphocholine + acetate + H(+). It carries out the reaction 1-O-dodecyl-2-acetyl-sn-glycero-3-phosphocholine + H2O = 1-O-dodecyl-sn-glycero-3-phosphocholine + acetate + H(+). The enzyme catalyses 1-O-tetradecyl-2-acetyl-sn-glycero-3-phosphocholine + H2O = 1-O-tetradecyl-sn-glycero-3-phosphocholine + acetate + H(+). It catalyses the reaction 1-O-hexadecyl-2-acetyl-sn-glycero-3-phosphocholine + H2O = 1-O-hexadecyl-sn-glycero-3-phosphocholine + acetate + H(+). The catalysed reaction is 1-O-octadecyl-2-acetyl-sn-glycero-3-phosphocholine + H2O = 1-O-octadecyl-sn-glycero-3-phosphocholine + acetate + H(+). It carries out the reaction 1-hexadecanoyl-2-acetyl-sn-glycero-3-phosphocholine + H2O = 1-hexadecanoyl-sn-glycero-3-phosphocholine + acetate + H(+). The enzyme catalyses 1-hexadecanoyl-2-propionyl-sn-glycero-3-phosphocholine + H2O = propanoate + 1-hexadecanoyl-sn-glycero-3-phosphocholine + H(+). It catalyses the reaction 1-hexadecanoyl-2-butanoyl-sn-glycero-3-phosphocholine + H2O = butanoate + 1-hexadecanoyl-sn-glycero-3-phosphocholine + H(+). The catalysed reaction is 1-hexadecanoyl-2-pentanoyl-sn-glycero-3-phosphocholine + H2O = pentanoate + 1-hexadecanoyl-sn-glycero-3-phosphocholine + H(+). It carries out the reaction 1-hexadecanoyl-2-glutaroyl-sn-glycero-3-phosphocholine + H2O = glutarate + 1-hexadecanoyl-sn-glycero-3-phosphocholine + H(+). The enzyme catalyses 1-hexadecanoyl-2-(5-oxopentanoyl)-sn-glycero-3-phosphocholine + H2O = 5-oxopentanoate + 1-hexadecanoyl-sn-glycero-3-phosphocholine + H(+). It catalyses the reaction 1-hexadecanoyl-2-(9-oxononanoyl)-sn-glycero-3-phosphocholine + H2O = 9-oxononanoate + 1-hexadecanoyl-sn-glycero-3-phosphocholine + H(+). The catalysed reaction is 1-hexadecanoyl-2-[9-hydroperoxy-(10E-octadecenoyl)]-sn-glycero-3-phosphocholine + H2O = 9-hydroperoxy-10E-octadecenoate + 1-hexadecanoyl-sn-glycero-3-phosphocholine + H(+). It carries out the reaction 1-hexadecanoyl-2-(10-hydroperoxy-8E-octadecenoyl)-sn-glycero-3-phosphocholine + H2O = 10-hydroperoxy-(8E)-octadecenoate + 1-hexadecanoyl-sn-glycero-3-phosphocholine + H(+). Functionally, lipoprotein-associated calcium-independent phospholipase A2 involved in phospholipid catabolism during inflammatory and oxidative stress response. At the lipid-aqueous interface, hydrolyzes the ester bond of fatty acyl group attached at sn-2 position of phospholipids (phospholipase A2 activity). Specifically targets phospholipids with a short-chain fatty acyl group at sn-2 position. Can hydrolyze phospholipids with long fatty acyl chains, only if they carry oxidized functional groups. Hydrolyzes and inactivates platelet-activating factor (PAF, 1-O-alkyl-2-acetyl-sn-glycero-3-phosphocholine), a potent pro-inflammatory signaling lipid that acts through PTAFR on various innate immune cells. Hydrolyzes oxidatively truncated phospholipids carrying an aldehyde group at omega position, preventing their accumulation in low-density lipoprotein (LDL) particles and uncontrolled pro-inflammatory effects. As part of high-density lipoprotein (HDL) particles, can hydrolyze phospholipids having long-chain fatty acyl hydroperoxides at sn-2 position and protect against potential accumulation of these oxylipins in the vascular wall. Catalyzes the release from membrane phospholipids of F2-isoprostanes, lipid biomarkers of cellular oxidative damage. This is Platelet-activating factor acetylhydrolase (PLA2G7) from Homo sapiens (Human).